We begin with the raw amino-acid sequence, 404 residues long: Adenosylhomocysteinase (404 aa).

The substrate site is built by Asp114 and Glu139. 140–142 serves as a coordination point for NAD(+); that stretch reads TTT. Substrate-binding residues include Lys169 and Asp173. NAD(+)-binding positions include Asn174, 203–208, Glu226, Asn261, 282–284, and Asn329; these read GYGWCG and AGH.

Belongs to the adenosylhomocysteinase family. NAD(+) serves as cofactor.

It is found in the cytoplasm. The enzyme catalyses S-adenosyl-L-homocysteine + H2O = L-homocysteine + adenosine. The protein operates within amino-acid biosynthesis; L-homocysteine biosynthesis; L-homocysteine from S-adenosyl-L-homocysteine: step 1/1. Its function is as follows. May play a key role in the regulation of the intracellular concentration of adenosylhomocysteine. This is Adenosylhomocysteinase from Thermotoga maritima (strain ATCC 43589 / DSM 3109 / JCM 10099 / NBRC 100826 / MSB8).